We begin with the raw amino-acid sequence, 432 residues long: Enolase (432 aa).

A (2R)-2-phosphoglycerate-binding site is contributed by glutamine 163. Residue glutamate 205 is the Proton donor of the active site. Mg(2+) contacts are provided by aspartate 242, glutamate 287, and aspartate 314. (2R)-2-phosphoglycerate is bound by residues lysine 339, arginine 368, serine 369, and lysine 390. The active-site Proton acceptor is the lysine 339.

Belongs to the enolase family. It depends on Mg(2+) as a cofactor.

It is found in the cytoplasm. It localises to the secreted. The protein localises to the cell surface. It carries out the reaction (2R)-2-phosphoglycerate = phosphoenolpyruvate + H2O. Its pathway is carbohydrate degradation; glycolysis; pyruvate from D-glyceraldehyde 3-phosphate: step 4/5. Functionally, catalyzes the reversible conversion of 2-phosphoglycerate (2-PG) into phosphoenolpyruvate (PEP). It is essential for the degradation of carbohydrates via glycolysis. This is Enolase from Myxococcus xanthus (strain DK1622).